The primary structure comprises 556 residues: Optineurin (556 aa).

The disordered stretch occupies residues M1–S33. Residues E11–N22 show a composition bias toward basic and acidic residues. A coiled-coil region spans residues E38–A164. Positions D168–I173 match the LIR motif. The stretch at V219 to D487 forms a coiled coil. The tract at residues E245–I274 is disordered. Residues E253–N265 are compositionally biased toward polar residues. A UBAN motif is present at residues D453 to R458. The segment at M496–P524 is disordered. The CCHC NOA-type zinc-finger motif lies at Q526–N556. C534, C537, H550, and C554 together coordinate Zn(2+).

In terms of assembly, binds to linear ubiquitin chains. Interacts with LC3 family members. In terms of tissue distribution, expressed in erythrocytes, skeletal muscle, heart, spleen and brain. Weakly expressed in lung and liver (at protein level).

The protein localises to the cytoplasm. It is found in the perinuclear region. It localises to the golgi apparatus. Its subcellular location is the trans-Golgi network. The protein resides in the cytoplasmic vesicle. The protein localises to the recycling endosome. It is found in the autophagosome. Functionally, probably part of the TNF-alpha signaling pathway that can shift the equilibrium toward induction of cell death. May act by regulating membrane trafficking and cellular morphogenesis. May act as autophagy receptor that interacts directly with both the cargo to become degraded and an autophagy modifier of the MAP1 LC3 family. The polypeptide is Optineurin (OPTN) (Gallus gallus (Chicken)).